The sequence spans 225 residues: Ribonuclease 3 (225 aa).

The 123-residue stretch at 5–127 (IEKLTRQLGY…IIGAVYLDSD (123 aa)) folds into the RNase III domain. Residue E40 coordinates Mg(2+). The active site involves D44. D113 and E116 together coordinate Mg(2+). Residue E116 is part of the active site. A DRBM domain is found at 154–224 (DPKTRLQEFL…AELALEQLTN (71 aa)).

This sequence belongs to the ribonuclease III family. As to quaternary structure, homodimer. Mg(2+) is required as a cofactor.

Its subcellular location is the cytoplasm. It catalyses the reaction Endonucleolytic cleavage to 5'-phosphomonoester.. Its function is as follows. Digests double-stranded RNA. Involved in the processing of primary rRNA transcript to yield the immediate precursors to the large and small rRNAs (23S and 16S). Processes some mRNAs, and tRNAs when they are encoded in the rRNA operon. Processes pre-crRNA and tracrRNA of type II CRISPR loci if present in the organism. In Vibrio vulnificus (strain YJ016), this protein is Ribonuclease 3.